The following is a 296-amino-acid chain: Protein-export membrane protein SecF (296 aa).

6 consecutive transmembrane segments (helical) span residues 23-43 (MIIY…ANYV), 144-164 (AIVY…RVPV), 169-189 (VVFS…IFGI), 194-214 (ATIA…ILLT), 236-256 (GFTM…FSTA), and 265-285 (VLIF…AGVL).

Belongs to the SecD/SecF family. SecF subfamily. Part of the protein translocation apparatus. Forms a complex with SecD.

It is found in the cell membrane. Involved in protein export. This Pyrococcus furiosus (strain ATCC 43587 / DSM 3638 / JCM 8422 / Vc1) protein is Protein-export membrane protein SecF.